The primary structure comprises 394 residues: NAD(P)H-quinone oxidoreductase subunit H (394 aa).

It belongs to the complex I 49 kDa subunit family. NDH-1 can be composed of about 15 different subunits; different subcomplexes with different compositions have been identified which probably have different functions.

The protein localises to the cellular thylakoid membrane. It catalyses the reaction a plastoquinone + NADH + (n+1) H(+)(in) = a plastoquinol + NAD(+) + n H(+)(out). It carries out the reaction a plastoquinone + NADPH + (n+1) H(+)(in) = a plastoquinol + NADP(+) + n H(+)(out). In terms of biological role, NDH-1 shuttles electrons from an unknown electron donor, via FMN and iron-sulfur (Fe-S) centers, to quinones in the respiratory and/or the photosynthetic chain. The immediate electron acceptor for the enzyme in this species is believed to be plastoquinone. Couples the redox reaction to proton translocation, and thus conserves the redox energy in a proton gradient. Cyanobacterial NDH-1 also plays a role in inorganic carbon-concentration. This chain is NAD(P)H-quinone oxidoreductase subunit H, found in Nostoc sp. (strain PCC 7120 / SAG 25.82 / UTEX 2576).